Reading from the N-terminus, the 2186-residue chain is Non-reducing polyketide synthase men2 (2186 aa).

The 240-residue stretch at 16 to 255 (FFGDQTVDAL…MQLPLGTPAH (240 aa)) folds into the Starter acyltransferase (SAT) domain. Residues 382 to 815 (SNLIAVVGQS…GGNNCVLLEE (434 aa)) form the Ketosynthase family 3 (KS3) domain. Catalysis depends on for beta-ketoacyl synthase activity residues Cys554, His690, and His729. The Malonyl-CoA:ACP transacylase (MAT) domain maps to 914–1204 (VFAFTGQGAQ…SSLVKSTLSA (291 aa)). The tract at residues 1299–1623 (TASLQQVRSE…TRRVLATVLG (325 aa)) is product template (PT) domain. An N-terminal hotdog fold region spans residues 1303 to 1434 (QQVRSEQING…CKLHFDKRGS (132 aa)). The PKS/mFAS DH domain occupies 1303–1619 (QQVRSEQING…FQRLTRRVLA (317 aa)). His1335 serves as the catalytic Proton acceptor; for dehydratase activity. The tract at residues 1463–1619 (TGHRLPKSVV…FQRLTRRVLA (157 aa)) is C-terminal hotdog fold. The active-site Proton donor; for dehydratase activity is Asp1523. The Carrier 1 domain occupies 1666–1742 (VGDEKADAAI…GLRRAISELS (77 aa)). Position 1702 is an O-(pantetheine 4'-phosphoryl)serine (Ser1702). Positions 1747–1785 (GPASGSVSVSSSATTTHGMTTPSSTSSAQSSQSSQTPDG) are disordered. Positions 1749 to 1783 (ASGSVSVSSSATTTHGMTTPSSTSSAQSSQSSQTP) are enriched in low complexity. One can recognise a Carrier 2 domain in the interval 1784–1861 (DGPGIYANAV…HVRRALGSDS (78 aa)). An O-(pantetheine 4'-phosphoryl)serine modification is found at Ser1821. Residues 1857 to 1878 (LGSDSDGDSKPKSAPAPPAPEP) form a disordered region. The tract at residues 1921–2163 (LFFLPDGTGY…TMPCDHLSLL (243 aa)) is thioesterase (TE) domain.

It depends on pantetheine 4'-phosphate as a cofactor.

Its pathway is secondary metabolite biosynthesis. Its function is as follows. Non-reducing polyketide synthase; part of the gene cluster that mediates the biosynthesis of menisporopsin A, a bioactive macrocyclic polylactone. The biosynthesis of menisporopsin A is performed by a reducing (man1) and a non-reducing (men2) polyketide synthase that catalyze the formation of each menisporopsin A subunits, while the esterification and cyclolactonization activities are probably peformed by the unusual thioesterase domain of men2. First, a reduced diketide intermediate, 3-hydroxybutyryl-S-ACP is produced by men1 and transferred to men2; this is followed by a second reduced diketide which is further elongated using 3 units of malonyl-coA to form a reduced pentaketide. The cyclization of this intermediate by the PT domain forms the second subunit, 2,4-dihydroxy-6-(2-hydroxy-n-propyl)benzoyl-S-ACP. The TE domain of men2 then esterifies the secondary hydroxyl group on the side chain of the second subunit with the acyl-TE of the first subunit to form the first ester intermediate. This process occurs iteratively to form a linear tetraester intermediate. The final subunit is formed by a similar process, except that an extra malonyl-CoA is required in an additional elongation step to form a reduced hexaketide intermediate, and the carbonyl group next to the secondary hydroxyl group is reduced by a trans-acting ketoreductase. Again, the PT domain catalyzes cyclization to form the largest subunit, 2,4-dihydroxy-6-(2,4-dihydroxy-n-pentyl) benzoyl-S-ACP. Then the linear pentaester intermediate is formed. In this step, if the intermediate transfer rate is slow, intra- molecular cyclization involving the secondary hydroxyl group of the pentaester intermediate may occur to form menisporopsin B. Alternatively, transfer of the pentaester intermediate to the TE domain would allow cyclolactonization to be catalyzed by the TE to form menisporopsin A. This is Non-reducing polyketide synthase men2 from Menisporopsis theobromae.